Reading from the N-terminus, the 464-residue chain is Ribulose bisphosphate carboxylase/oxygenase activase A, chloroplastic (464 aa).

Residues 1–48 constitute a chloroplast transit peptide; it reads MAAAFSSTVGAPASTPTNFLGKKLKKQVTSAVNYHGKSSKANRFTVMA. Position 155 to 162 (155 to 162) interacts with ATP; sequence GGKGQGKS.

It belongs to the RuBisCO activase family.

It is found in the plastid. The protein resides in the chloroplast stroma. Functionally, activation of RuBisCO (ribulose-1,5-bisphosphate carboxylase/oxygenase; EC 4.1.1.39) involves the ATP-dependent carboxylation of the epsilon-amino group of lysine leading to a carbamate structure. This Hordeum vulgare (Barley) protein is Ribulose bisphosphate carboxylase/oxygenase activase A, chloroplastic (RCAA).